Reading from the N-terminus, the 268-residue chain is Nitrite transporter NirC (268 aa).

Residues Met1–Leu25 are Cytoplasmic-facing. Residues Gly26–Phe46 traverse the membrane as a helical segment. Residues Thr47–Leu59 are Periplasmic-facing. Residues Val60–Phe80 traverse the membrane as a helical segment. The Cytoplasmic segment spans residues Thr81–Asn112. Residues Leu113–Val133 form a helical membrane-spanning segment. Residues Asp134–Met151 are Periplasmic-facing. A helical transmembrane segment spans residues Val152 to Leu172. The Cytoplasmic portion of the chain corresponds to Arg173 to Lys179. Residues Phe180–Ala200 form a helical membrane-spanning segment. At Asn201–Asn225 the chain is on the periplasmic side. A helical membrane pass occupies residues Leu226–Trp246. Residues Tyr247 to Gly268 are Cytoplasmic-facing.

This sequence belongs to the FNT transporter (TC 1.A.16) family.

The protein resides in the cell inner membrane. Catalyzes nitrite uptake and nitrite export across the cytoplasmic membrane. Is up to 10-fold more active than NarK or NarU in nitrite uptake for subsequent reduction in the cytoplasm by the NirB/NirD nitrite reductase. The sequence is that of Nitrite transporter NirC (nirC) from Escherichia coli (strain K12).